Here is a 304-residue protein sequence, read N- to C-terminus: DCN1-like protein 3 (304 aa).

Disordered stretches follow at residues 1-87 and 285-304; these read MGQC…EESS and VEGRGALSSGPEGLCPEEQT. The N-myristoyl glycine moiety is linked to residue Gly-2. The DCUN1 domain occupies 86-278; the sequence is SSLQRLEELF…LFDTFVEWEM (193 aa).

As to quaternary structure, part of a complex containing DCUN1D3, CUL3 and RBX1. Interacts (via the DCUN1 domain) with the unneddylated cullins: interacts with CUL1, CUL2, CUL3, CUL4A, CUL4B and CUL5; these interactions promote the cullin neddylation and the identity of the cullin dictates the affinity of the interaction. Interacts preferentially with CUL3; this interaction triggers the relocalization of CUL3 to the cell membrane where CUL3 is neddylated. Interacts (via DCUN1 domain) with RBX1. May also interact with regulators or subunits of cullin-RING ligases such as RNF7, ELOB and DDB1; these interactions are bridged by cullins. Interacts (via DCUN1 domain) with CAND1; this interaction is bridged by cullins and strongly inhibits cullin neddylation. These CAND-cullin-DCNL complexes can only be neddylated in the presence of a substrate adapter. Interacts (via DCUN1 domain) with the N-terminally acetylated form of UBE2M and UBE2F.

The protein resides in the cell membrane. It is found in the cytoplasm. Its subcellular location is the nucleus. It localises to the perinuclear region. In terms of biological role, contributes to the neddylation of all cullins by transferring NEDD8 from N-terminally acetylated NEDD8-conjugating E2s enzyme to different cullin C-terminal domain-RBX complexes and may play a role in the cell cycle progression by regulating the SCF ubiquitin E3 ligase complex, after UV damage. At the cell membrane, can promote and as well inhibit cullins neddylation. The protein is DCN1-like protein 3 of Rattus norvegicus (Rat).